The sequence spans 369 residues: Glutamine synthetase (369 aa).

Positions 23–102 constitute a GS beta-grasp domain; the sequence is VIAEYIWVDS…VLAECWNNDG (80 aa). The GS catalytic domain maps to 109-369; the sequence is HRHEAAKLFE…MSKEFERESS (261 aa).

It belongs to the glutamine synthetase family. As to quaternary structure, homooctamer.

It localises to the cytoplasm. It carries out the reaction L-glutamate + NH4(+) + ATP = L-glutamine + ADP + phosphate + H(+). This is Glutamine synthetase (GLN1) from Eremothecium gossypii (strain ATCC 10895 / CBS 109.51 / FGSC 9923 / NRRL Y-1056) (Yeast).